The chain runs to 330 residues: Short chain dehydrogenase macD (330 aa).

Residues Lys-57, Asp-86, Asn-113, Tyr-204, and Lys-208 each contribute to the NADP(+) site. Tyr-204 (proton donor) is an active-site residue. Lys-208 functions as the Lowers pKa of active site Tyr in the catalytic mechanism.

This sequence belongs to the short-chain dehydrogenases/reductases (SDR) family.

Its pathway is secondary metabolite biosynthesis; terpenoid biosynthesis. Its function is as follows. Short chain dehydrogenase; part of the gene cluster that mediates the biosynthesis of macrophorins, isoprenoid epoxycyclohexenones containing cyclized drimane moieties. The first step of the pathway is the synthesis of 6-methylsalicylic acid (6-MSA) by the polyketide synthase macA. 6-MSA is then converted to m-cresol by the decarboxylase macB. The cytochrome P450 monooxygenase macC then catalyzes the oxidation of m-cresol to toluquinol. Epoxidation of toluquinol is then performed by the short chain dehydrogenase macD, with the help of macE, and a further prenylation by macG leads to 7-deacetoxyyanuthone A. The next step is the hydroxylation of C-22 of 7-deacetoxyyanuthone A by the cytochrome P450 monooxygenase macH to yield 22-deacetylyanuthone A. O-Mevalon transferase macI then attaches mevalon to the hydroxyl group of 22-deacetylyanuthone A to produce yanuthone E. The terpene cyclase macJ catalyzes the cyclization of 22-deacetylyanuthone A to macrophorin A. MacJ is also able to catalyze cyclization of yanuthone E and 7-deacetoxyyanuthone A to their corresponding macrophorins. The macJ products can be further modified by macH and macJ, as well as by the FAD-dependent monooxygenase macF, to produce additional macrophorins, including 4'-oxomacrophorin A, 4'-oxomacrophorin D and 4'-oxomacrophorin E. The sequence is that of Short chain dehydrogenase macD from Penicillium terrestre.